The chain runs to 496 residues: Fatty acyl-CoA reductase 8 (496 aa).

Belongs to the fatty acyl-CoA reductase family.

It catalyses the reaction a long-chain fatty acyl-CoA + 2 NADPH + 2 H(+) = a long-chain primary fatty alcohol + 2 NADP(+) + CoA. Catalyzes the reduction of fatty acyl-CoA to fatty alcohols. Catalyzes specifically the formation of C16:0 fatty alcohol. In Arabidopsis thaliana (Mouse-ear cress), this protein is Fatty acyl-CoA reductase 8 (FAR8).